An 874-amino-acid polypeptide reads, in one-letter code: Probable leucine--tRNA ligase, cytoplasmic (874 aa).

Positions 36–46 match the 'HIGH' region motif; that stretch reads PYMNGRLHLGH. A 'KMSKS' region motif is present at residues 544–548; the sequence is KMSKS. Lysine 547 contributes to the ATP binding site.

Belongs to the class-I aminoacyl-tRNA synthetase family.

Its subcellular location is the cytoplasm. It catalyses the reaction tRNA(Leu) + L-leucine + ATP = L-leucyl-tRNA(Leu) + AMP + diphosphate. The sequence is that of Probable leucine--tRNA ligase, cytoplasmic from Encephalitozoon cuniculi (strain GB-M1) (Microsporidian parasite).